The sequence spans 125 residues: Fluoride-specific ion channel FluC (125 aa).

4 helical membrane-spanning segments follow: residues 5 to 25 (FVFI…LAGF), 33 to 53 (FFPF…GFLW), 69 to 89 (FVLV…LETG), and 101 to 121 (IVNL…GIVL). Residues G76 and T79 each coordinate Na(+).

Belongs to the fluoride channel Fluc/FEX (TC 1.A.43) family.

The protein resides in the cell inner membrane. It carries out the reaction fluoride(in) = fluoride(out). Na(+) is not transported, but it plays an essential structural role and its presence is essential for fluoride channel function. Fluoride-specific ion channel. Important for reducing fluoride concentration in the cell, thus reducing its toxicity. This chain is Fluoride-specific ion channel FluC, found in Desulforapulum autotrophicum (strain ATCC 43914 / DSM 3382 / VKM B-1955 / HRM2) (Desulfobacterium autotrophicum).